A 1096-amino-acid chain; its full sequence is Inactive phospholipase C-like protein 1 (1096 aa).

A disordered region spans residues 1–101 (MAEGAASREA…KKTVSFSSMP (101 aa)). A compositionally biased stretch (low complexity) spans 26–41 (GADAASGDAAPEASGG). Ser-48 and Ser-78 each carry phosphoserine. The segment at 83 to 222 (PSNQKCGGRK…NIWVSGLRYL (140 aa)) is interaction with PPP1C. Thr-94 is modified (phosphothreonine). Ser-96 carries the post-translational modification Phosphoserine. Residues 114–224 (SFMQAGCELK…WVSGLRYLVS (111 aa)) enclose the PH domain. The PI-PLC X-box domain maps to 399 to 543 (QDMTQPLSHY…LKHMIIVKGK (145 aa)). Residues 544-568 (KLPSESDLLEGEVTDEDEEAEMSRR) form an interaction with GABA A beta subunit region. Position 557 is a phosphothreonine (Thr-557). Ser-570 bears the Phosphoserine mark. Positions 586 to 702 (LSDLVSICKS…GYVLRPSIMR (117 aa)) constitute a PI-PLC Y-box domain. Residues 702-831 (RDEVSYFSAN…PGYRHVPLRS (130 aa)) form the C2 domain. Positions 1040 to 1060 (DLLKNAKNEAVENIKQIQLAC) form a coiled coil. A disordered region spans residues 1067 to 1096 (KGPGSAAEAKGKRSLEAIEEKESSEENGKL). Residues 1075–1096 (AKGKRSLEAIEEKESSEENGKL) show a composition bias toward basic and acidic residues. Ser-1080 bears the Phosphoserine mark.

It belongs to the PRIP family. As to quaternary structure, interacts with PPP2CA, GABA receptor beta subunits, GABA receptor gamma-2 subunits. Interacts with Ins(1,4,5)P3, Ins(1,4,5,6)P4, GABARAP, and PPP1C. May form a ternary complex with GABA receptor beta subunit and GABARAP. The formation of a ternary complex with GABA receptor beta subunit and GABARAP could be the key step for facilitating the association of GABARAP with the GABA receptor gamma-2 subunit and to allow it to be transported at the right destination. Phosphorylation of Thr-94 resulted in dissociation of PPP1C from PRIP1. In vitro, phosphorylated by the catalytic subunit of PKA. Expressed in brain. Found in the granular cell and Purkinje cell layers in the cerebellum; and in the hippocampal pyramidal cells, dentate granule cells and pyramidal granule cells of the cerebral cortex in the cerebrum.

It is found in the cytoplasm. Functionally, involved in an inositol phospholipid-based intracellular signaling cascade. Shows no PLC activity to phosphatidylinositol 4,5-bisphosphate and phosphatidylinositol. Component in the phospho-dependent endocytosis process of GABA A receptor. Acts as an inhibitor of PPP1C. The sequence is that of Inactive phospholipase C-like protein 1 (Plcl1) from Rattus norvegicus (Rat).